Here is a 75-residue protein sequence, read N- to C-terminus: MKKDIHPAYVETQVTCTCGATFTTRSTATSGTIHADVCSQCHPFYTGKQKILDTGGRVARFEARYAKKAAADAKK.

Residues Cys16, Cys18, Cys38, and Cys41 each contribute to the Zn(2+) site.

The protein belongs to the bacterial ribosomal protein bL31 family. Type A subfamily. Part of the 50S ribosomal subunit. Requires Zn(2+) as cofactor.

Functionally, binds the 23S rRNA. This is Large ribosomal subunit protein bL31 from Nocardioides sp. (strain ATCC BAA-499 / JS614).